The chain runs to 479 residues: BRAP2 RING ZnF UBP domain-containing protein 2 (479 aa).

The RING-type; atypical zinc-finger motif lies at 167–207 (CPVCLERLDQDTGGILTTMCNHSFHCSCISNWPDSSCPVCR). A UBP-type; degenerate zinc finger spans residues 201 to 294 (SSCPVCRYCQ…GKLVELNSHG (94 aa)). Zn(2+)-binding residues include C218, C221, C230, C233, C238, H245, H249, and H255. The stretch at 328–442 (NELLQAQLEN…MAQMDGESEV (115 aa)) forms a coiled coil. The disordered stretch occupies residues 434–479 (AQMDGESEVSETKEVQDATVSTTNTSSSGAGNVIHANKKKSNRRKG). Residues 451–466 (ATVSTTNTSSSGAGNV) are compositionally biased toward low complexity. The span at 469-479 (ANKKKSNRRKG) shows a compositional bias: basic residues.

In terms of assembly, component of the heteromeric E3 ligase complex made of BRIZ1 and BRIZ2. Forms heterooligomers with BRIZ1 via coiled-coil domains.

The catalysed reaction is S-ubiquitinyl-[E2 ubiquitin-conjugating enzyme]-L-cysteine + [acceptor protein]-L-lysine = [E2 ubiquitin-conjugating enzyme]-L-cysteine + N(6)-ubiquitinyl-[acceptor protein]-L-lysine.. It participates in protein modification; protein ubiquitination. Its function is as follows. RING-type ubiquitin E3 ligase that binds ubiquitin and is required for seed germination and post-germination growth. The protein is BRAP2 RING ZnF UBP domain-containing protein 2 of Arabidopsis thaliana (Mouse-ear cress).